A 155-amino-acid polypeptide reads, in one-letter code: Snaclec agkicetin-C subunit alpha (155 aa).

An N-terminal signal peptide occupies residues M1–A23. Cystine bridges form between C25/C36, C53/C149, and C124/C141. In terms of domain architecture, C-type lectin spans Y32 to K150.

This sequence belongs to the snaclec family. As to quaternary structure, heterodimer of subunits alpha and beta; disulfide-linked. As to expression, expressed by the venom gland.

It is found in the secreted. Functionally, is a potent glycoprotein Ibalpha (GP1BA) antagonist. Concentration-dependently inhibits botrocetin-, ristocetin- and low dose thrombin-induced platelet aggregation. Inhibits platelet adhesion only through inhibiting the vWF interaction with GP1BA, but has minimal effect on other platelet receptors, such as alpha-IIb/beta-3 (ITGA2B/ITGB3) or alpha-2/beta-1 (ITGA2/ITGB1). Causes an instant severe thrombocytopenia in rats and is not lethal to mice. The polypeptide is Snaclec agkicetin-C subunit alpha (Deinagkistrodon acutus (Hundred-pace snake)).